Reading from the N-terminus, the 251-residue chain is Putative glutathione-independent glyoxalase hsp3105 (251 aa).

The protein belongs to the peptidase C56 family. HSP31-like subfamily.

Its subcellular location is the cytoplasm. The protein resides in the nucleus. The enzyme catalyses methylglyoxal + H2O = (R)-lactate + H(+). Its function is as follows. May catalyze the conversion of methylglyoxal (MG) to D-lactate in a single glutathione (GSH)-independent step. May play a role in detoxifying endogenously produced glyoxals. Involved in protection against reactive oxygen species (ROS). The protein is Putative glutathione-independent glyoxalase hsp3105 of Schizosaccharomyces pombe (strain 972 / ATCC 24843) (Fission yeast).